The chain runs to 42 residues: Potassium channel toxin gamma-KTx 3.4 (42 aa).

Disulfide bonds link Cys5–Cys23, Cys11–Cys34, Cys20–Cys39, and Cys24–Cys41.

This sequence belongs to the ergtoxin family. Gamma-KTx 3 subfamily. Expressed by the venom gland.

The protein localises to the secreted. Functionally, blocks Kv11/ERG potassium channels. This Centruroides gracilis (Slenderbrown scorpion) protein is Potassium channel toxin gamma-KTx 3.4.